Here is a 164-residue protein sequence, read N- to C-terminus: Putative pre-16S rRNA nuclease (164 aa).

The protein belongs to the YqgF nuclease family.

The protein localises to the cytoplasm. Functionally, could be a nuclease involved in processing of the 5'-end of pre-16S rRNA. In Rhizobium johnstonii (strain DSM 114642 / LMG 32736 / 3841) (Rhizobium leguminosarum bv. viciae), this protein is Putative pre-16S rRNA nuclease.